Reading from the N-terminus, the 132-residue chain is Small ribosomal subunit protein uS8c (132 aa).

Belongs to the universal ribosomal protein uS8 family. In terms of assembly, part of the 30S ribosomal subunit.

The protein localises to the plastid. It is found in the chloroplast. Its function is as follows. One of the primary rRNA binding proteins, it binds directly to 16S rRNA central domain where it helps coordinate assembly of the platform of the 30S subunit. This chain is Small ribosomal subunit protein uS8c (rps8), found in Physcomitrium patens (Spreading-leaved earth moss).